The sequence spans 464 residues: Sensor protein IrlS (464 aa).

Topologically, residues 1–13 (MIRRLLPRTLRAR) are periplasmic. The helical transmembrane segment at 14–34 (LTALIILSTAATLALSGVALY) threads the bilayer. The Cytoplasmic portion of the chain corresponds to 35–166 (SALHNRLVGM…DHALLRAYAY (132 aa)). A helical membrane pass occupies residues 167–187 (TVVVIEVLAVVLTAALAYGIA). The region spanning 188–241 (MLGLSPLRRLVARAEQMSSSRLAQPLPELDTSGELKEMEHAFNAMLKRLDESFV) is the HAMP domain. The Periplasmic portion of the chain corresponds to 188–464 (MLGLSPLRRL…FWLKFPAHAA (277 aa)). The region spanning 249-463 (NLAHDMRTPL…TFWLKFPAHA (215 aa)) is the Histidine kinase domain. H252 bears the Phosphohistidine; by autocatalysis mark.

The protein localises to the cell inner membrane. The catalysed reaction is ATP + protein L-histidine = ADP + protein N-phospho-L-histidine.. Its function is as follows. Member of the two-component regulatory system IrlR/IrlS. May be involved in invasion of eukaryotic cells and heavy-metal resistance. Probably activates IrlR by phosphorylation. This Burkholderia pseudomallei (strain K96243) protein is Sensor protein IrlS (irlS).